The primary structure comprises 175 residues: NADH-ubiquinone oxidoreductase chain 6 (175 aa).

5 helical membrane passes run methionine 1–alanine 21, serine 25–leucine 45, phenylalanine 47–valine 67, alanine 88–leucine 108, and tyrosine 149–methionine 169.

It belongs to the complex I subunit 6 family. In terms of assembly, core subunit of respiratory chain NADH dehydrogenase (Complex I) which is composed of 45 different subunits.

The protein localises to the mitochondrion inner membrane. It catalyses the reaction a ubiquinone + NADH + 5 H(+)(in) = a ubiquinol + NAD(+) + 4 H(+)(out). Its function is as follows. Core subunit of the mitochondrial membrane respiratory chain NADH dehydrogenase (Complex I) which catalyzes electron transfer from NADH through the respiratory chain, using ubiquinone as an electron acceptor. Essential for the catalytic activity and assembly of complex I. The chain is NADH-ubiquinone oxidoreductase chain 6 (MT-ND6) from Canis lupus familiaris (Dog).